Consider the following 215-residue polypeptide: Ras-related protein Rab-5A (215 aa).

10 residues coordinate GTP: Ser-29, Ala-30, Gly-32, Lys-33, Ser-34, Ser-35, His-46, Glu-47, Thr-52, and Gly-78. A Mg(2+)-binding site is contributed by Ser-34. Short sequence motifs (switch) lie at residues 44–56 and 77–93; these read QFHEFQESTIGAA and AGQERYHSLAPMYYRGA. Residue Thr-52 participates in Mg(2+) binding. Phosphoserine is present on Ser-84. GTP contacts are provided by Asn-133, Lys-134, Asp-136, Ala-164, and Lys-165. Residues 185–215 are disordered; the sequence is EPQNPGINCTRGRGVDLTEPTQPTRSQCCSN. Residues 203 to 215 are compositionally biased toward polar residues; that stretch reads EPTQPTRSQCCSN. S-geranylgeranyl cysteine attachment occurs at residues Cys-212 and Cys-213.

This sequence belongs to the small GTPase superfamily. Rab family. In terms of assembly, interacts with GDI1; this promotes dissociation from membranes; phosphorylation at Ser-84 disrupts this interaction. Interacts with GDI2; phosphorylation at Ser-84 disrupts the interaction. Interacts with SGSM1 and SGSM3. Interacts with PIK3CB. Interacts with RIN1 and GAPVD1, which regulate its pathway, probably by acting as a GEF. Interacts with RINL. Interacts with ALS2CL, SUN2, ZFYVE20 and RUFY1. Interacts with RABEP1; one RABEP1 homodimer binds two RAB5A chains, but at opposite sides of the dimer. Interacts with OCRL and INPP5F. May be a component of a complex composed of RAB5A, DYN2 and PIK3C3. Does not interact with the BLOC-3 complex (heterodimer of HPS1 and HPS4). Interacts with CLN5. Interacts with APPL2. Interacts with F8A1/F8A2/F8A3. Found in a complex with F8A1/F8A2/F8A3, HTT and RAB5A; mediates the recruitment of HTT by RAB5A onto early endosomes. Interacts with ATP9A. Interacts with PPP1R21; mediates the recruitment of FERRY complex by RAB5A onto early endosomes. Requires Mg(2+) as cofactor. In terms of processing, phosphorylation of Ser-84 in the switch II region by LRRK2 prevents the association of RAB regulatory proteins, including RAB GDP dissociation inhibitors GDI1 and GDI2.

The protein localises to the cell membrane. It is found in the early endosome membrane. The protein resides in the melanosome. Its subcellular location is the cytoplasmic vesicle. It localises to the cell projection. The protein localises to the ruffle. It is found in the membrane. The protein resides in the cytoplasm. Its subcellular location is the cytosol. It localises to the phagosome membrane. The protein localises to the endosome membrane. The catalysed reaction is GTP + H2O = GDP + phosphate + H(+). With respect to regulation, regulated by guanine nucleotide exchange factors (GEFs) including RINL, which promote the exchange of bound GDP for free GTP. Regulated by GTPase activating proteins (GAPs) which increase the GTP hydrolysis activity. Inhibited by GDP dissociation inhibitors (GDIs). Its function is as follows. The small GTPases Rab are key regulators of intracellular membrane trafficking, from the formation of transport vesicles to their fusion with membranes. Rabs cycle between an inactive GDP-bound form and an active GTP-bound form that is able to recruit to membranes different sets of downstream effectors directly responsible for vesicle formation, movement, tethering and fusion. RAB5A is required for the fusion of plasma membranes and early endosomes. Contributes to the regulation of filopodia extension. Required for the exosomal release of SDCBP, CD63, PDCD6IP and syndecan. Regulates maturation of apoptotic cell-containing phagosomes, probably downstream of DYN2 and PIK3C3. This Sus scrofa (Pig) protein is Ras-related protein Rab-5A (RAB5A).